A 555-amino-acid polypeptide reads, in one-letter code: MAADMQRKRSSEGPDGTLAPSDGQSVERAESPTPGLAQGMEPGAGQEGAMFVHARSYEDLTESEDGAASGESPKEGAGGPPPLATDMRQISQDFSELSTQLTGVARDLQEEMLPGSSEDWPESPGAARRPATEPPRDGAGEGDEEEAAEAWRRHQKHVFVLSEAGKPVYSRYGSEEALSSTMGVMVALVSFLEADKNAIRSIHADGYKVVFVRRSPLVLVAVARTRQSAQELAQELLYIYYQILSLLTGAQLSHIFQQKQNYDLRRLLSGSERITDNLLQLMARDPSFLMGAARCLPLAAAVRDVVSASLQQARARSLVFSILLARNQLVALVRRKDQFLHPIDLHLLFNLISSSSSFREGEAWTPVCLPKFNAAGFFHAHISYLEPDTDLCLLLVSTDREDFFAVSDCRRRFQERLRKRGAHLALREALRTPYYSVAQVGVPDLRHFLYKSKSSGLFTSPEIEAPYDSEEEQERLLGLYQYLHSRAHNASRPLKTIYYTGPNENLLAWVTGAFELYMCYSPLGTKASAVSAIHKLMRWIRKEEDRLFILTPLTY.

Residues 1-12 are compositionally biased toward basic and acidic residues; it reads MAADMQRKRSSE. Positions 1–90 are disordered; it reads MAADMQRKRS…PPLATDMRQI (90 aa). 2 positions are modified to phosphoserine: S31 and S56. T61 is subject to Phosphothreonine. Residue S91 is modified to Phosphoserine. Positions 112–149 are disordered; sequence MLPGSSEDWPESPGAARRPATEPPRDGAGEGDEEEAAE. Over residues 130–139 the composition is skewed to basic and acidic residues; the sequence is PATEPPRDGA.

It belongs to the MON1/SAND family. In terms of assembly, interacts with CCZ1. Found in a complex with RMC1, CCZ1, MON1A and MON1B. The MON1A-CCZ1B complex interacts with RIMOC1. The MON1A-CCZ1B complex interacts with RAB7A and this interaction is enhanced in the presence of RIMOC1.

Its function is as follows. Plays an important role in membrane trafficking through the secretory apparatus. Not involved in endocytic trafficking to lysosomes. Acts in concert with CCZ1, as a guanine exchange factor (GEF) for RAB7, promotes the exchange of GDP to GTP, converting it from an inactive GDP-bound form into an active GTP-bound form. The sequence is that of Vacuolar fusion protein MON1 homolog A (MON1A) from Bos taurus (Bovine).